The sequence spans 149 residues: 3-hydroxyacyl-[acyl-carrier-protein] dehydratase FabZ (149 aa).

His53 is an active-site residue.

Belongs to the thioester dehydratase family. FabZ subfamily.

The protein localises to the cytoplasm. It catalyses the reaction a (3R)-hydroxyacyl-[ACP] = a (2E)-enoyl-[ACP] + H2O. Involved in unsaturated fatty acids biosynthesis. Catalyzes the dehydration of short chain beta-hydroxyacyl-ACPs and long chain saturated and unsaturated beta-hydroxyacyl-ACPs. This Polynucleobacter asymbioticus (strain DSM 18221 / CIP 109841 / QLW-P1DMWA-1) (Polynucleobacter necessarius subsp. asymbioticus) protein is 3-hydroxyacyl-[acyl-carrier-protein] dehydratase FabZ.